A 124-amino-acid polypeptide reads, in one-letter code: Protein MT1307 (124 aa).

The tat-type signal signal peptide spans methionine 1 to alanine 35.

The protein to M.tuberculosis Rv1813c. Post-translationally, predicted to be exported by the Tat system. The position of the signal peptide cleavage has not been experimentally proven.

This chain is Protein MT1307, found in Mycobacterium tuberculosis (strain CDC 1551 / Oshkosh).